The chain runs to 314 residues: MKVTILHQKFIRFVYLLDLELIKRKFVLGLSGGQDSLALLKLLCDYRKTYFGLLKLVYCDHRWRLESIANAQRLYYLSEYSNISFYYFATSTFLSSETQSRTWRYKNLLKISLSFEYSYLLTAHTLSDISETTIYRLVRNLRISEINNLLFTFLYIKKTLSISRPLASVTRNDTYWLCSLSYLPLWSDYTNYWLFLSRNRIRQELFPYLKNYFNCSLERYLDGFIYSNKINLITLNIKLKKILSKIFGYTNDGLYFNVSLFKLLPFFYQHILIRDFHFLFFHNYRSPSQFNRLLFAIALEKSQKVFIRKQYHII.

Residue 31–36 coordinates ATP; that stretch reads SGGQDS.

This sequence belongs to the tRNA(Ile)-lysidine synthase family.

It is found in the plastid. Its subcellular location is the chloroplast. The catalysed reaction is cytidine(34) in tRNA(Ile2) + L-lysine + ATP = lysidine(34) in tRNA(Ile2) + AMP + diphosphate + H(+). Functionally, ligates lysine onto the cytidine present at position 34 of the AUA codon-specific tRNA(Ile) that contains the anticodon CAU, in an ATP-dependent manner. Cytidine is converted to lysidine, thus changing the amino acid specificity of the tRNA from methionine to isoleucine. The polypeptide is tRNA(Ile)-lysidine synthase, chloroplastic (Cyanidium caldarium (Red alga)).